A 399-amino-acid chain; its full sequence is Glutathione S-transferase LANCL1 (399 aa).

A2 bears the N-acetylalanine mark. At K142 the chain carries N6-acetyllysine. C276 is a binding site for Zn(2+). K317 lines the glutathione pocket. 2 residues coordinate Zn(2+): C322 and H323. 364–367 (RTAD) serves as a coordination point for glutathione.

Belongs to the LanC-like protein family. In terms of assembly, interacts with the C-terminal of STOM. Interacts with the EPS8 SH3 domain. Interaction with EPS8 is inhibited by glutathione binding. Detected in spinal cord (at protein level). Ubiquitous. Strongly expressed in brain, testis, alveolar macrophages and epithelial cells of the lung, kidney and intestine. Expression in brain increases during the first postnatal month and remaining high in adult.

It localises to the cytoplasm. It is found in the cell membrane. The enzyme catalyses RX + glutathione = an S-substituted glutathione + a halide anion + H(+). It catalyses the reaction 1-chloro-2,4-dinitrobenzene + glutathione = 2,4-dinitrophenyl-S-glutathione + chloride + H(+). Functionally, functions as a glutathione transferase. Catalyzes conjugation of the glutathione (GSH) to artificial substrates 1-chloro-2,4-dinitrobenzene (CDNB) and p-nitrophenyl acetate. Mitigates neuronal oxidative stress during normal postnatal development and in response to oxidative stresses probably through GSH antioxidant defense mechanism. May play a role in EPS8 signaling. Binds glutathione. This chain is Glutathione S-transferase LANCL1, found in Mus musculus (Mouse).